The chain runs to 1065 residues: Probable importin-7 homolog (1065 aa).

The Importin N-terminal domain maps to 25–98; the sequence is AEAQLQQIKV…KENLIDLLVH (74 aa). The interval 958–996 is disordered; it reads ENGGDLGEDEGDNFDDQNDDDDQDSEEDLFEDEDTPDFE. Acidic residues predominate over residues 963–996; it reads LGEDEGDNFDDQNDDDDQDSEEDLFEDEDTPDFE.

Belongs to the importin beta family.

The protein localises to the cytoplasm. It localises to the nucleus. In terms of biological role, may function in nuclear protein import. This chain is Probable importin-7 homolog, found in Dictyostelium discoideum (Social amoeba).